The sequence spans 288 residues: Galactose/N-acetyl-D-galactosamine lectin light subunit 1 (288 aa).

An N-terminal signal peptide occupies residues 1 to 15; sequence MIILVLLISYSFGKT. Asn205 and Asn261 each carry an N-linked (GlcNAc...) asparagine glycan.

As to quaternary structure, heterodimer composed of a 170 kDa heavy subunit (hgl) and a 31/35 kDa light subunit (lgl); disulfide-linked.

It localises to the cell membrane. Its function is as follows. Light subunit of a heterodimeric lectin; the heavy subunit binds galactose and N-acetyl-D-galactosamine of host glycoproteins and thus mediates adhesion to host cells. This chain is Galactose/N-acetyl-D-galactosamine lectin light subunit 1, found in Entamoeba histolytica (strain ATCC 30459 / HM-1:IMSS / ABRM).